A 2643-amino-acid chain; its full sequence is BAH and coiled-coil domain-containing protein 1 (2643 aa).

2 disordered regions span residues 23 to 45 and 84 to 106; these read SAAA…HFQP and SAAS…RGSH. Residue K220 is modified to N6-acetyllysine. 2 stretches are compositionally biased toward basic and acidic residues: residues 224–249 and 683–702; these read KEKV…DRQK and ERPD…DGEV. Disordered regions lie at residues 224 to 273, 674 to 704, 721 to 758, 985 to 1023, and 1038 to 1299; these read KEKV…SCEG, PATK…EVRQ, GRPD…LESE, RKPE…PSSA, and TLKT…KALP. Basic and acidic residues predominate over residues 985–1003; it reads RKPEDRHMELEEAAQEKTP. Positions 1133–1149 are enriched in pro residues; it reads RPEPPRTFLPGEPPPCS. A compositionally biased stretch (polar residues) spans 1210–1224; it reads ATGQTNSTQGGMQNE. Over residues 1269 to 1284 the composition is skewed to acidic residues; it reads QEEETQLEESGGDSEV. Coiled-coil stretches lie at residues 1346 to 1373 and 1437 to 1486; these read ALLS…DVLA and LKAA…SSRS. Residues 1466–1484 are compositionally biased toward basic and acidic residues; the sequence is QRELARLQRRHDHEREESS. 8 disordered regions span residues 1466 to 1520, 1537 to 1559, 1604 to 1641, 1746 to 1781, 1875 to 1896, 2055 to 2124, 2322 to 2341, and 2349 to 2386; these read QREL…DSKK, GDEP…QSVS, KEAA…GREM, RAPG…SRDT, FDED…GVQL, SSCR…HFLG, CPSS…TGVP, and SMSS…SDDE. Basic residues predominate over residues 1487–1501; sequence PARRGPGRPRKRKHS. Residues 1631–1641 show a composition bias toward basic and acidic residues; sequence PHPDGDSGREM. Positions 1757 to 1767 are enriched in basic residues; it reads GKKKAKGKVKT. Over residues 1875–1892 the composition is skewed to acidic residues; it reads FDEDDTSFSDEEEEEEEA. A compositionally biased stretch (low complexity) spans 2349 to 2374; sequence SMSSSSSGSSTSSSSGSVSTSSLCSS. Acidic residues predominate over residues 2375–2386; that stretch reads DNEDSSYSSDDE. The BAH domain occupies 2517–2637; sequence ETLRIGDCAV…PTTGRLVTAD (121 aa).

This chain is BAH and coiled-coil domain-containing protein 1 (Bahcc1), found in Mus musculus (Mouse).